The sequence spans 78 residues: Large ribosomal subunit protein bL28 (78 aa).

The disordered stretch occupies residues 1 to 25; it reads MSRVCQVTGKRPAVGNNRSHAKNAT.

This sequence belongs to the bacterial ribosomal protein bL28 family.

The protein is Large ribosomal subunit protein bL28 of Vibrio cholerae serotype O1 (strain ATCC 39541 / Classical Ogawa 395 / O395).